The following is a 264-amino-acid chain: Thymidylate synthase (264 aa).

Residue R21 participates in dUMP binding. H51 provides a ligand contact to (6R)-5,10-methylene-5,6,7,8-tetrahydrofolate. 126 to 127 contributes to the dUMP binding site; that stretch reads RR. The active-site Nucleophile is C146. Residues 166–169, N177, and 207–209 each bind dUMP; these read RSAD and HLY. D169 lines the (6R)-5,10-methylene-5,6,7,8-tetrahydrofolate pocket. S263 is a binding site for (6R)-5,10-methylene-5,6,7,8-tetrahydrofolate.

The protein belongs to the thymidylate synthase family. Bacterial-type ThyA subfamily. In terms of assembly, homodimer.

The protein localises to the cytoplasm. The catalysed reaction is dUMP + (6R)-5,10-methylene-5,6,7,8-tetrahydrofolate = 7,8-dihydrofolate + dTMP. It participates in pyrimidine metabolism; dTTP biosynthesis. Functionally, catalyzes the reductive methylation of 2'-deoxyuridine-5'-monophosphate (dUMP) to 2'-deoxythymidine-5'-monophosphate (dTMP) while utilizing 5,10-methylenetetrahydrofolate (mTHF) as the methyl donor and reductant in the reaction, yielding dihydrofolate (DHF) as a by-product. This enzymatic reaction provides an intracellular de novo source of dTMP, an essential precursor for DNA biosynthesis. The chain is Thymidylate synthase from Neisseria gonorrhoeae (strain ATCC 700825 / FA 1090).